The sequence spans 158 residues: SsrA-binding protein (158 aa).

The tract at residues 134 to 158 is disordered; sequence KLHDKRETEKERDWNRQKSRLLKTG. Basic and acidic residues predominate over residues 137 to 149; the sequence is DKRETEKERDWNR.

It belongs to the SmpB family.

The protein resides in the cytoplasm. In terms of biological role, required for rescue of stalled ribosomes mediated by trans-translation. Binds to transfer-messenger RNA (tmRNA), required for stable association of tmRNA with ribosomes. tmRNA and SmpB together mimic tRNA shape, replacing the anticodon stem-loop with SmpB. tmRNA is encoded by the ssrA gene; the 2 termini fold to resemble tRNA(Ala) and it encodes a 'tag peptide', a short internal open reading frame. During trans-translation Ala-aminoacylated tmRNA acts like a tRNA, entering the A-site of stalled ribosomes, displacing the stalled mRNA. The ribosome then switches to translate the ORF on the tmRNA; the nascent peptide is terminated with the 'tag peptide' encoded by the tmRNA and targeted for degradation. The ribosome is freed to recommence translation, which seems to be the essential function of trans-translation. The polypeptide is SsrA-binding protein (Allorhizobium ampelinum (strain ATCC BAA-846 / DSM 112012 / S4) (Agrobacterium vitis (strain S4))).